The sequence spans 161 residues: Anthranilate 1,2-dioxygenase small subunit (161 aa).

The protein belongs to the bacterial ring-hydroxylating dioxygenase beta subunit family. As to quaternary structure, part of a multicomponent enzyme system composed of a reductase (AndAa), a ferredoxin (AndAb) and a two-subunit oxygenase component (AndAc and AndAd).

It catalyses the reaction anthranilate + NADH + O2 + 3 H(+) = catechol + NH4(+) + CO2 + NAD(+). The catalysed reaction is anthranilate + NADPH + O2 + 3 H(+) = catechol + NH4(+) + CO2 + NADP(+). The protein operates within aromatic compound metabolism; anthranilate degradation via hydroxylation; catechol from anthranilate: step 1/1. Its function is as follows. Oxygenase component of anthranilate dioxygenase multicomponent enzyme system which catalyzes the incorporation of both atoms of molecular oxygen into anthranilate to form catechol. Can also act on benzoate and salicylate but not on 2-chlorobenzoate or o-toluate. This is Anthranilate 1,2-dioxygenase small subunit from Burkholderia cepacia (Pseudomonas cepacia).